Here is a 226-residue protein sequence, read N- to C-terminus: Ribonuclease 3 (226 aa).

In terms of domain architecture, RNase III spans 6-128 (INRLQRKLGY…LIGAIFLDSD (123 aa)). Position 41 (Glu-41) interacts with Mg(2+). Asp-45 is a catalytic residue. Positions 114 and 117 each coordinate Mg(2+). Residue Glu-117 is part of the active site. Positions 155-225 (DPKTRLQEYL…AEQALKQLEL (71 aa)) constitute a DRBM domain.

The protein belongs to the ribonuclease III family. As to quaternary structure, homodimer. Requires Mg(2+) as cofactor.

Its subcellular location is the cytoplasm. The enzyme catalyses Endonucleolytic cleavage to 5'-phosphomonoester.. Functionally, digests double-stranded RNA. Involved in the processing of primary rRNA transcript to yield the immediate precursors to the large and small rRNAs (23S and 16S). Processes some mRNAs, and tRNAs when they are encoded in the rRNA operon. Processes pre-crRNA and tracrRNA of type II CRISPR loci if present in the organism. This chain is Ribonuclease 3, found in Photorhabdus laumondii subsp. laumondii (strain DSM 15139 / CIP 105565 / TT01) (Photorhabdus luminescens subsp. laumondii).